The primary structure comprises 311 residues: 4-diphosphocytidyl-2-C-methyl-D-erythritol kinase (311 aa).

The active site involves Lys-16. ATP is bound at residue Pro-100–Ser-110. Asp-142 is an active-site residue.

The protein belongs to the GHMP kinase family. IspE subfamily.

The enzyme catalyses 4-CDP-2-C-methyl-D-erythritol + ATP = 4-CDP-2-C-methyl-D-erythritol 2-phosphate + ADP + H(+). It functions in the pathway isoprenoid biosynthesis; isopentenyl diphosphate biosynthesis via DXP pathway; isopentenyl diphosphate from 1-deoxy-D-xylulose 5-phosphate: step 3/6. Catalyzes the phosphorylation of the position 2 hydroxy group of 4-diphosphocytidyl-2C-methyl-D-erythritol. The sequence is that of 4-diphosphocytidyl-2-C-methyl-D-erythritol kinase from Prochlorococcus marinus (strain MIT 9215).